A 601-amino-acid polypeptide reads, in one-letter code: ATP-dependent lipid A-core flippase (601 aa).

The ABC transmembrane type-1 domain maps to 28-328 (LLSVVGLIVY…LTRVNAEFQR (301 aa)). 6 helical membrane-spanning segments follow: residues 32-52 (VGLI…GPFI), 81-101 (VLLM…FANF), 160-180 (ALIS…LMFY), 183-203 (WKLS…ITIV), 267-287 (AVSQ…VLYA), and 296-316 (DLTA…LQPI). In terms of domain architecture, ABC transporter spans 360–597 (LRFDNVSFSY…GGMYAKLYQM (238 aa)). 394 to 401 (GRSGSGKS) is a binding site for ATP.

The protein belongs to the ABC transporter superfamily. Lipid exporter (TC 3.A.1.106) family. As to quaternary structure, homodimer.

The protein resides in the cell inner membrane. It carries out the reaction ATP + H2O + lipid A-core oligosaccharideSide 1 = ADP + phosphate + lipid A-core oligosaccharideSide 2.. Functionally, involved in lipopolysaccharide (LPS) biosynthesis. Translocates lipid A-core from the inner to the outer leaflet of the inner membrane. Transmembrane domains (TMD) form a pore in the inner membrane and the ATP-binding domain (NBD) is responsible for energy generation. This chain is ATP-dependent lipid A-core flippase, found in Shewanella oneidensis (strain ATCC 700550 / JCM 31522 / CIP 106686 / LMG 19005 / NCIMB 14063 / MR-1).